A 467-amino-acid polypeptide reads, in one-letter code: Fumarate hydratase class II (467 aa).

Substrate contacts are provided by residues serine 98 to threonine 100, arginine 126, histidine 129 to aspartate 132, serine 139 to asparagine 141, and threonine 187. The Proton donor/acceptor role is filled by histidine 188. Residue serine 318 is part of the active site. Substrate contacts are provided by residues serine 319 and lysine 324–asparagine 326.

Belongs to the class-II fumarase/aspartase family. Fumarase subfamily. As to quaternary structure, homotetramer.

It localises to the cytoplasm. It catalyses the reaction (S)-malate = fumarate + H2O. It participates in carbohydrate metabolism; tricarboxylic acid cycle; (S)-malate from fumarate: step 1/1. Functionally, involved in the TCA cycle. Catalyzes the stereospecific interconversion of fumarate to L-malate. The chain is Fumarate hydratase class II from Shigella flexneri.